Here is a 35-residue protein sequence, read N- to C-terminus: Photosystem II reaction center protein T (35 aa).

Residues 3–23 (ALVYTFLLVSTLGIIFFAIFF) form a helical membrane-spanning segment.

The protein belongs to the PsbT family. In terms of assembly, PSII is composed of 1 copy each of membrane proteins PsbA, PsbB, PsbC, PsbD, PsbE, PsbF, PsbH, PsbI, PsbJ, PsbK, PsbL, PsbM, PsbT, PsbY, PsbZ, Psb30/Ycf12, at least 3 peripheral proteins of the oxygen-evolving complex and a large number of cofactors. It forms dimeric complexes.

The protein resides in the plastid. The protein localises to the chloroplast thylakoid membrane. In terms of biological role, found at the monomer-monomer interface of the photosystem II (PS II) dimer, plays a role in assembly and dimerization of PSII. PSII is a light-driven water plastoquinone oxidoreductase, using light energy to abstract electrons from H(2)O, generating a proton gradient subsequently used for ATP formation. This Schisandra chinensis (Chinese magnolia vine) protein is Photosystem II reaction center protein T.